A 75-amino-acid chain; its full sequence is DNA-directed RNA polymerase subunit Rpo5 (75 aa).

It belongs to the archaeal Rpo5/eukaryotic RPB5 RNA polymerase subunit family. As to quaternary structure, part of the RNA polymerase complex.

The protein localises to the cytoplasm. The catalysed reaction is RNA(n) + a ribonucleoside 5'-triphosphate = RNA(n+1) + diphosphate. DNA-dependent RNA polymerase (RNAP) catalyzes the transcription of DNA into RNA using the four ribonucleoside triphosphates as substrates. This Pyrobaculum aerophilum (strain ATCC 51768 / DSM 7523 / JCM 9630 / CIP 104966 / NBRC 100827 / IM2) protein is DNA-directed RNA polymerase subunit Rpo5.